Consider the following 196-residue polypeptide: Orotate phosphoribosyltransferase (196 aa).

Position 117 to 125 (117 to 125 (EDVVTTGLS)) interacts with 5-phospho-alpha-D-ribose 1-diphosphate. Orotate is bound by residues Thr121 and Arg149.

Belongs to the purine/pyrimidine phosphoribosyltransferase family. PyrE subfamily. Homodimer. Requires Mg(2+) as cofactor.

It carries out the reaction orotidine 5'-phosphate + diphosphate = orotate + 5-phospho-alpha-D-ribose 1-diphosphate. It functions in the pathway pyrimidine metabolism; UMP biosynthesis via de novo pathway; UMP from orotate: step 1/2. In terms of biological role, catalyzes the transfer of a ribosyl phosphate group from 5-phosphoribose 1-diphosphate to orotate, leading to the formation of orotidine monophosphate (OMP). This chain is Orotate phosphoribosyltransferase, found in Rhizorhabdus wittichii (strain DSM 6014 / CCUG 31198 / JCM 15750 / NBRC 105917 / EY 4224 / RW1) (Sphingomonas wittichii).